Consider the following 385-residue polypeptide: Succinate--CoA ligase [ADP-forming] subunit beta (385 aa).

Positions 9–244 (KALFRTFGVP…LDEEDPLEVE (236 aa)) constitute an ATP-grasp domain. ATP is bound by residues Lys-46, 53 to 55 (GRG), Glu-99, Gln-102, and Glu-107. Mg(2+)-binding residues include Asn-199 and Asp-213. Substrate is bound by residues Asn-264 and 321–323 (GIL).

The protein belongs to the succinate/malate CoA ligase beta subunit family. Heterotetramer of two alpha and two beta subunits. Mg(2+) is required as a cofactor.

The catalysed reaction is succinate + ATP + CoA = succinyl-CoA + ADP + phosphate. It carries out the reaction GTP + succinate + CoA = succinyl-CoA + GDP + phosphate. The protein operates within carbohydrate metabolism; tricarboxylic acid cycle; succinate from succinyl-CoA (ligase route): step 1/1. Its function is as follows. Succinyl-CoA synthetase functions in the citric acid cycle (TCA), coupling the hydrolysis of succinyl-CoA to the synthesis of either ATP or GTP and thus represents the only step of substrate-level phosphorylation in the TCA. The beta subunit provides nucleotide specificity of the enzyme and binds the substrate succinate, while the binding sites for coenzyme A and phosphate are found in the alpha subunit. The chain is Succinate--CoA ligase [ADP-forming] subunit beta from Desulforapulum autotrophicum (strain ATCC 43914 / DSM 3382 / VKM B-1955 / HRM2) (Desulfobacterium autotrophicum).